The primary structure comprises 444 residues: D(2) dopamine receptor (444 aa).

At 1 to 37 (MDPLNLSWYDDDPESRNWSRPFNGSEGKADRPPYNYY) the chain is on the extracellular side. Residues Asn-5, Asn-17, and Asn-23 are each glycosylated (N-linked (GlcNAc...) asparagine). A helical membrane pass occupies residues 38–60 (AMLLTLLIFVIVFGNVLVCMAVS). The Cytoplasmic segment spans residues 61-70 (REKALQTTTN). Residues 71–93 (YLIVSLAVADLLVATLVMPWVVY) traverse the membrane as a helical segment. The Extracellular portion of the chain corresponds to 94 to 108 (LEVVGEWKFSRIHCD). Cysteines 107 and 182 form a disulfide. Residues 109-130 (IFVTLDVMMCTASILNLCAISI) traverse the membrane as a helical segment. Topologically, residues 131–151 (DRYTAVAMPMLYNTRYSSKRR) are cytoplasmic. The chain crosses the membrane as a helical span at residues 152-172 (VTVMIAIVWVLSFTISCPMLF). Over 173–188 (GLNNTDQNECIIANPA) the chain is Extracellular. A helical membrane pass occupies residues 189–213 (FVVYSSIVSFYVPFIVTLLVYIKIY). An interaction with PPP1R9B region spans residues 211-374 (KIYIVLRRRR…SQQKEKKATQ (164 aa)). Over 214–374 (IVLRRRRKRV…SQQKEKKATQ (161 aa)) the chain is Cytoplasmic. Residues 281–332 (MEMLSSTSPPERTRYSPIPPSHHQLTLPDPSHHGLHSTPDSPAKPEKNGHAK) form a disordered region. The helical transmembrane segment at 375–396 (MLAIVLGVFIICWLPFFITHIL) threads the bilayer. The Extracellular portion of the chain corresponds to 397–410 (NIHCDCNIPPVLYS). A disulfide bridge links Cys-400 with Cys-402. The helical transmembrane segment at 411-432 (AFTWLGYVNSAVNPIIYTTFNI) threads the bilayer. Over 433–444 (EFRKAFLKILHC) the chain is Cytoplasmic. The S-palmitoyl cysteine moiety is linked to residue Cys-444.

It belongs to the G-protein coupled receptor 1 family. Forms homo- and heterooligomers with DRD4. The interaction with DRD4 may modulate agonist-induced downstream signaling. Interacts with CADPS and CADPS2. Interacts with GPRASP1, PPP1R9B and CLIC6. Interacts with ARRB2. Interacts with HTR2A. Interacts with DRD1. Interacts with KCNA2. Post-translationally, palmitoylated. Palmitoylation which is required for proper localization to the plasma membrane and stability of the receptor could be carried on by ZDHHC4, ZDHHC3 and ZDHHC8.

The protein resides in the cell membrane. The protein localises to the golgi apparatus membrane. Dopamine receptor whose activity is mediated by G proteins which inhibit adenylyl cyclase. Positively regulates postnatal regression of retinal hyaloid vessels via suppression of VEGFR2/KDR activity, downstream of OPN5. This Bos taurus (Bovine) protein is D(2) dopamine receptor (DRD2).